Consider the following 262-residue polypeptide: KTSTRTRCAFEVAARDQGAGVTYLEPSASQIRHKESIKDTARVLGRMYDGIEYRGFGQDVVEELAKYAGVPVFNGLTNEFHPTQMLADALTMREHSGKPLNQTAFAYVGDARYNMANSLLVLGAKLGMDVRIGAPKTLWPSENIVARARAVAEETGGKILLTENAEEAVKGVDFIHTDVWVSMGEPKEAWQERIDLLKDYRVTPELMAVSGNPQVKFMHCLPAFHNRETKVGEWIYETFGLNGVEVTEEVFESSASIVFDQA.

Carbamoyl phosphate-binding positions include 3–7, Gln30, Arg54, and 81–84; these read STRTR and HPTQ. Residues Asn114, Asp178, and 182–183 contribute to the L-ornithine site; that span reads SM. Carbamoyl phosphate contacts are provided by residues 219–222 and Thr247; that span reads HCLP.

This sequence belongs to the aspartate/ornithine carbamoyltransferase superfamily. OTCase family.

It is found in the cytoplasm. The enzyme catalyses carbamoyl phosphate + L-ornithine = L-citrulline + phosphate + H(+). Its pathway is amino-acid biosynthesis; L-arginine biosynthesis; L-arginine from L-ornithine and carbamoyl phosphate: step 1/3. In terms of biological role, reversibly catalyzes the transfer of the carbamoyl group from carbamoyl phosphate (CP) to the N(epsilon) atom of ornithine (ORN) to produce L-citrulline. In Neisseria mucosa, this protein is Ornithine carbamoyltransferase (argF).